We begin with the raw amino-acid sequence, 109 residues long: uncharacterized protein (109 aa).

A helical membrane pass occupies residues 78-98 (YTCIMYIGLLCMFVLLYMTVI).

It is found in the membrane. This is an uncharacterized protein from Saccharomyces cerevisiae (strain ATCC 204508 / S288c) (Baker's yeast).